The chain runs to 608 residues: MKTPAWSRLAGYAWGVLLWNVLVALFGAYVRATGSGAGCGAHWPTCNGEVIPRAPQVETLIEFTHRATSGLAFLSVLALFLWALRAFPKGHPARFGAGLALFFMVTESLVGASLVLFGWTADNVSRERAVVQMVHLANTYFLLAALALTAWWASGGGPLRLRGQGAVGLALFLGLLALLFLGMSGAVTALGDLLFPVGSTLEALERSLTPGEHFLVRLRVLHPLIAVSVGLYVVFAGYLVAHLRPSPLTRRLAQGLAYLYGAQLLAGLINVALKAPVWMQILHLLLAYAIWLLFVFLATSALERGAKRVELGEGGEAVHRGTGGATWRDYLALTKPRVISLLLFTALFGALIAAKGWPGLGVFLAVALGGYMMAGAANAINMVVDRDIDARMKRTAKRPTVTQRVSSRDALLFAFALAVLGFAVLWWGANLLAATLALMGLIWYVLVYTLYLKRRTWHNIVIGGAAGAFPPLVGWAAVTGELSLFAWYLFALIFFWTPVHFWALALMIQDDYRAVGVPMLPVVLGERATVIQIALYALLTALISLMPLLLGELGLLYLAASLLLNALLLLKSLALYRRPERRTAVSLYKYSMLYLALLFAAMAVDRAV.

The COX15/CtaA stretch occupies residues 1 to 338; that stretch reads MKTPAWSRLA…DYLALTKPRV (338 aa). Transmembrane regions (helical) follow at residues 10 to 30, 67 to 87, 99 to 119, 139 to 159, 167 to 187, 220 to 240, 252 to 272, 277 to 297, 338 to 357, 362 to 384, 411 to 431, 432 to 452, 460 to 480, 488 to 508, 530 to 550, 555 to 575, and 584 to 604; these read AGYAWGVLLWNVLVALFGAYV, ATSGLAFLSVLALFLWALRAF, LALFFMVTESLVGASLVLFGW, TYFLLAALALTAWWASGGGPL, VGLALFLGLLALLFLGMSGAV, VLHPLIAVSVGLYVVFAGYLV, LAQGLAYLYGAQLLAGLINVA, VWMQILHLLLAYAIWLLFVFL, VISLLLFTALFGALIAAKGW, VFLAVALGGYMMAGAANAINMVV, LLFAFALAVLGFAVLWWGANL, LAATLALMGLIWYVLVYTLYL, IVIGGAAGAFPPLVGWAAVTG, YLFALIFFWTPVHFWALALMI, VIQIALYALLTALISLMPLLL, LLYLAASLLLNALLLLKSLAL, and AVSLYKYSMLYLALLFAAMAV. A protoheme IX prenyltransferase region spans residues 339–608; sequence ISLLLFTALF…FAAMAVDRAV (270 aa).

This sequence in the N-terminal section; belongs to the COX15/CtaA family. The protein in the C-terminal section; belongs to the UbiA prenyltransferase family. Protoheme IX farnesyltransferase subfamily.

The protein resides in the cell inner membrane. It carries out the reaction heme b + (2E,6E)-farnesyl diphosphate + H2O = Fe(II)-heme o + diphosphate. The protein operates within porphyrin-containing compound metabolism; heme O biosynthesis; heme O from protoheme: step 1/1. Converts heme B (protoheme IX) to heme O by substitution of the vinyl group on carbon 2 of heme B porphyrin ring with a hydroxyethyl farnesyl side group. The sequence is that of Protoheme IX farnesyltransferase (ctaB) from Thermus thermophilus (strain ATCC 27634 / DSM 579 / HB8).